The chain runs to 360 residues: Putative transcription factor A494R (360 aa).

Residues 153-175 (CTCGGQMELWVNSTQSDLVCNEC) fold into a zinc finger.

The protein belongs to the nucleo-cytoplasmic large DNA viruses (NCLDVs) VLTF-3 family.

In terms of biological role, putative transcription factor. The chain is Putative transcription factor A494R from Paramecium bursaria Chlorella virus 1 (PBCV-1).